The primary structure comprises 216 residues: ATP phosphoribosyltransferase (216 aa).

Belongs to the ATP phosphoribosyltransferase family. Short subfamily. In terms of assembly, heteromultimer composed of HisG and HisZ subunits.

Its subcellular location is the cytoplasm. The catalysed reaction is 1-(5-phospho-beta-D-ribosyl)-ATP + diphosphate = 5-phospho-alpha-D-ribose 1-diphosphate + ATP. The protein operates within amino-acid biosynthesis; L-histidine biosynthesis; L-histidine from 5-phospho-alpha-D-ribose 1-diphosphate: step 1/9. In terms of biological role, catalyzes the condensation of ATP and 5-phosphoribose 1-diphosphate to form N'-(5'-phosphoribosyl)-ATP (PR-ATP). Has a crucial role in the pathway because the rate of histidine biosynthesis seems to be controlled primarily by regulation of HisG enzymatic activity. The protein is ATP phosphoribosyltransferase of Thiobacillus denitrificans (strain ATCC 25259 / T1).